Reading from the N-terminus, the 88-residue chain is Small integral membrane protein 13 (88 aa).

A helical membrane pass occupies residues 10–30; that stretch reads LVFVATLLIVLLLMVCGWYFV. Over residues 48 to 61 the composition is skewed to polar residues; sequence TGSQEGDNEQPSGS. The tract at residues 48-88 is disordered; it reads TGSQEGDNEQPSGSETEEDPSASPQKIRSARQRRPPVDAGH. Residues S59 and S61 each carry the phosphoserine modification. Position 63 is a phosphothreonine (T63). S70 carries the phosphoserine modification.

Belongs to the SMIM13 family.

Its subcellular location is the membrane. The polypeptide is Small integral membrane protein 13 (Smim13) (Mus musculus (Mouse)).